Consider the following 1960-residue polypeptide: Myosin-9 (1960 aa).

Ala2 bears the N-acetylalanine mark. A mediates interaction with LIMCH1 region spans residues 2-838; the sequence is AQQAADKYLY…RLFTKVKPLL (837 aa). Lys8 bears the N6-acetyllysine mark. Residue Tyr11 is modified to Phosphotyrosine. Residues 27–77 enclose the Myosin N-terminal SH3-like domain; it reads AAKKLVWVPSSKNGFEPASLKEEVGEEAIVELVENGKKVKVNKDDIQKMNP. The Myosin motor domain maps to 81–776; it reads SKVEDMAELT…VLAHLEEERD (696 aa). At Lys102 the chain carries N6-acetyllysine. 174-181 lines the ATP pocket; that stretch reads GESGAGKT. 3 positions are modified to N6-acetyllysine: Lys299, Lys435, and Lys613. Ser628 is modified (phosphoserine). An actin-binding region spans residues 654-676; sequence LAKLMATLRNTNPNFVRCIIPNH. At Tyr754 the chain carries Phosphotyrosine. The 30-residue stretch at 779 to 808 folds into the IQ domain; it reads ITDVIIGFQACCRGYLARKAFAKRQQQLTA. Residues 841–1926 are a coiled coil; that stretch reads IRHEDELLAK…LKNKLRRGDL (1086 aa). Lys850 carries the post-translational modification N6-succinyllysine. Lys860, Lys975, and Lys1024 each carry N6-acetyllysine. Over residues 1035 to 1055 the composition is skewed to basic and acidic residues; sequence RLRREEKQRQELEKTRRKLEG. Residues 1035–1057 are disordered; it reads RLRREEKQRQELEKTRRKLEGDS. Ser1114 carries the post-translational modification Phosphoserine. Residues 1117–1167 are disordered; that stretch reads QEDLESERASRNKAEKQKRDLGEELEALKTELEDTLDSTAAQQELRSKREQ. Positions 1122–1148 are enriched in basic and acidic residues; the sequence is SERASRNKAEKQKRDLGEELEALKTEL. N6-acetyllysine is present on residues Lys1234 and Lys1249. Residues 1327–1352 are disordered; that stretch reads LSTKLKQMEDEKNSFREQLEEEEEAK. Positions 1332–1352 are enriched in basic and acidic residues; sequence KQMEDEKNSFREQLEEEEEAK. Residues Lys1357, Lys1392, Lys1404, Lys1410, Lys1459, and Lys1638 each carry the N6-acetyllysine modification. Lys1669 carries the post-translational modification N6-succinyllysine. Phosphoserine is present on Ser1714. The interval 1768 to 1788 is disordered; that stretch reads LERSHAQKNENARQQLERQNK. Residues Lys1793, Lys1802, and Lys1845 each carry the N6-acetyllysine modification. The tract at residues 1877–1908 is disordered; it reads RQLEEAEEEAQRANASRRKLQRELEDATETAD. Omega-N-methylarginine is present on Arg1923. A Phosphothreonine modification is found at Thr1939. The interval 1939–1960 is disordered; it reads TGDCSDEEVDGKADGADAKAAE. Ser1943 carries the phosphoserine modification. Residues 1948-1960 show a composition bias toward basic and acidic residues; that stretch reads DGKADGADAKAAE.

This sequence belongs to the TRAFAC class myosin-kinesin ATPase superfamily. Myosin family. Myosin is a hexameric protein that consists of 2 heavy chain subunits (MHC), 2 alkali light chain subunits (MLC) and 2 regulatory light chain subunits (MLC-2). Interacts with RASIP1. Interacts with DDR1. Interacts with PDLIM2. Interacts with SVIL. Interacts with HTRA3. Interacts with Myo7a. Interacts with CFAP95. Interacts with LIMCH1; independently of the integration of MYH9 into the myosin complex. Interacts with RAB3A. Interacts with ZBED4. Interacts with S100A4; this interaction increases cell motility. In terms of processing, ISGylated. Ubiquitination.

Its subcellular location is the cytoplasm. The protein resides in the cytoskeleton. The protein localises to the cell cortex. It localises to the cytoplasmic vesicle. It is found in the secretory vesicle. Its subcellular location is the cortical granule. Functionally, cellular myosin that appears to play a role in cytokinesis, cell shape, and specialized functions such as secretion and capping. Required for cortical actin clearance prior to oocyte exocytosis. Promotes cell motility in conjunction with S100A4. During cell spreading, plays an important role in cytoskeleton reorganization, focal contact formation (in the margins but not the central part of spreading cells), and lamellipodial retraction; this function is mechanically antagonized by MYH10. This Mus musculus (Mouse) protein is Myosin-9 (Myh9).